Reading from the N-terminus, the 320-residue chain is Cytochrome f (320 aa).

The N-terminal stretch at 1-35 (MQTRNAFSCIKEGITRSISISVMIYIIIRAPFSNA) is a signal peptide. Heme contacts are provided by Tyr-36, Cys-56, Cys-59, and His-60. The helical transmembrane segment at 286 to 306 (VQGLLFFLASIILAQIFLVLK) threads the bilayer.

This sequence belongs to the cytochrome f family. As to quaternary structure, the 4 large subunits of the cytochrome b6-f complex are cytochrome b6, subunit IV (17 kDa polypeptide, petD), cytochrome f and the Rieske protein, while the 4 small subunits are PetG, PetL, PetM and PetN. The complex functions as a dimer. It depends on heme as a cofactor.

The protein localises to the plastid. It is found in the chloroplast thylakoid membrane. Its function is as follows. Component of the cytochrome b6-f complex, which mediates electron transfer between photosystem II (PSII) and photosystem I (PSI), cyclic electron flow around PSI, and state transitions. This Phaseolus vulgaris (Kidney bean) protein is Cytochrome f.